The chain runs to 414 residues: Argininosuccinate synthase (414 aa).

12–20 (AYSGGLDTS) contributes to the ATP binding site. Tyr90 and Ser95 together coordinate L-citrulline. Gly120 contributes to the ATP binding site. Positions 122, 126, and 127 each coordinate L-aspartate. L-citrulline is bound at residue Asn126. Arg130, Ser179, Ser188, Glu264, and Tyr276 together coordinate L-citrulline.

It belongs to the argininosuccinate synthase family. Type 1 subfamily. In terms of assembly, homotetramer.

The protein localises to the cytoplasm. It catalyses the reaction L-citrulline + L-aspartate + ATP = 2-(N(omega)-L-arginino)succinate + AMP + diphosphate + H(+). The protein operates within amino-acid biosynthesis; L-arginine biosynthesis; L-arginine from L-ornithine and carbamoyl phosphate: step 2/3. In Alkaliphilus metalliredigens (strain QYMF), this protein is Argininosuccinate synthase.